The following is a 407-amino-acid chain: Aurofusarin biosynthesis cluster protein S (407 aa).

An N-terminal signal peptide occupies residues 1-35 (MSKQKPSLWRALRALSFIISIPLLIQYLVLKWYST). N52, N174, N196, N274, and N312 each carry an N-linked (GlcNAc...) asparagine glycan. 2 consecutive FAS1 domains span residues 52–192 (NLTV…DTVL) and 195–365 (PNST…DSIL).

As to quaternary structure, might be part of an extracellular enzyme complex composed of GIP1, aurF, aurO and aurS.

The protein localises to the secreted. Its subcellular location is the extracellular space. It participates in pigment biosynthesis. Its function is as follows. Part of the gene cluster that mediates the biosynthesis of aurofusarin, a red mycelium pigment which is acting as a mycotoxin. The first step is performed by the polyketide synthase which condenses one acetyl-CoA and 6 malonyl-CoA units to form the first intermediate, the cyclic heptaketide and yellow pigment YWA1. The C2 hydroxyl group in the pyrone ring of YWA1 is probably formed during ring closure by an aldol-type cyclization reaction. The dehydratase aurZ then acts as the first tailoring enzyme in the aurofusarin biosynthetic pathway by converting YWA1 to nor-rubrofusarin. Nor-rubrofusarin is then methylated to rubrofusarin by the O-methyltransferase aurJ. Rubrofusarin is then transported across the plasma membrane by the rubrofusarin-specific pump aurT for further enzymatic processing by the extracellular complex composed of GIP1, aurF, aurO and aurS to yield aurofusarin. This chain is Aurofusarin biosynthesis cluster protein S, found in Gibberella zeae (strain ATCC MYA-4620 / CBS 123657 / FGSC 9075 / NRRL 31084 / PH-1) (Wheat head blight fungus).